Here is a 271-residue protein sequence, read N- to C-terminus: Regulatory protein RecX (271 aa).

It belongs to the RecX family.

The protein localises to the cytoplasm. Modulates RecA activity. The protein is Regulatory protein RecX of Geobacillus sp. (strain WCH70).